The sequence spans 130 residues: Cytochrome b-c1 complex subunit 7 (130 aa).

Belongs to the UQCRB/QCR7 family. As to quaternary structure, component of the ubiquinol-cytochrome c oxidoreductase (cytochrome b-c1 complex, complex III, CIII), a multisubunit enzyme composed of 3 respiratory subunits cytochrome b, cytochrome c1 and Rieske protein, 2 core protein subunits, and additional low-molecular weight protein subunits. The complex exists as an obligatory dimer and forms supercomplexes (SCs) in the inner mitochondrial membrane with cytochrome c oxidase (complex IV, CIV).

The protein localises to the mitochondrion inner membrane. Component of the ubiquinol-cytochrome c oxidoreductase, a multisubunit transmembrane complex that is part of the mitochondrial electron transport chain which drives oxidative phosphorylation. The respiratory chain contains 3 multisubunit complexes succinate dehydrogenase (complex II, CII), ubiquinol-cytochrome c oxidoreductase (cytochrome b-c1 complex, complex III, CIII) and cytochrome c oxidase (complex IV, CIV), that cooperate to transfer electrons derived from NADH and succinate to molecular oxygen, creating an electrochemical gradient over the inner membrane that drives transmembrane transport and the ATP synthase. The cytochrome b-c1 complex catalyzes electron transfer from ubiquinol to cytochrome c, linking this redox reaction to translocation of protons across the mitochondrial inner membrane, with protons being carried across the membrane as hydrogens on the quinol. In the process called Q cycle, 2 protons are consumed from the matrix, 4 protons are released into the intermembrane space and 2 electrons are passed to cytochrome c. In Schistosoma mansoni (Blood fluke), this protein is Cytochrome b-c1 complex subunit 7.